The sequence spans 526 residues: ATP synthase subunit alpha (526 aa).

178–185 is an ATP binding site; the sequence is GDRQTGKT.

This sequence belongs to the ATPase alpha/beta chains family. As to quaternary structure, F-type ATPases have 2 components, CF(1) - the catalytic core - and CF(0) - the membrane proton channel. CF(1) has five subunits: alpha(3), beta(3), gamma(1), delta(1), epsilon(1). CF(0) has four main subunits: a(1), b(1), b'(1) and c(9-12).

The protein localises to the cell membrane. It catalyses the reaction ATP + H2O + 4 H(+)(in) = ADP + phosphate + 5 H(+)(out). Produces ATP from ADP in the presence of a proton gradient across the membrane. The alpha chain is a regulatory subunit. This Roseiflexus castenholzii (strain DSM 13941 / HLO8) protein is ATP synthase subunit alpha.